The sequence spans 164 residues: 6,7-dimethyl-8-ribityllumazine synthase (164 aa).

5-amino-6-(D-ribitylamino)uracil is bound by residues Tyr-27, 58–60, and 87–89; these read ALE and CVI. Residue 92–93 participates in (2S)-2-hydroxy-3-oxobutyl phosphate binding; the sequence is ET. The active-site Proton donor is His-95. Asn-120 is a binding site for 5-amino-6-(D-ribitylamino)uracil. A (2S)-2-hydroxy-3-oxobutyl phosphate-binding site is contributed by Arg-134.

This sequence belongs to the DMRL synthase family.

The enzyme catalyses (2S)-2-hydroxy-3-oxobutyl phosphate + 5-amino-6-(D-ribitylamino)uracil = 6,7-dimethyl-8-(1-D-ribityl)lumazine + phosphate + 2 H2O + H(+). It functions in the pathway cofactor biosynthesis; riboflavin biosynthesis; riboflavin from 2-hydroxy-3-oxobutyl phosphate and 5-amino-6-(D-ribitylamino)uracil: step 1/2. Its function is as follows. Catalyzes the formation of 6,7-dimethyl-8-ribityllumazine by condensation of 5-amino-6-(D-ribitylamino)uracil with 3,4-dihydroxy-2-butanone 4-phosphate. This is the penultimate step in the biosynthesis of riboflavin. The sequence is that of 6,7-dimethyl-8-ribityllumazine synthase from Methylocella silvestris (strain DSM 15510 / CIP 108128 / LMG 27833 / NCIMB 13906 / BL2).